The chain runs to 495 residues: Cytochrome P450 710A1 (495 aa).

The helical transmembrane segment at 5–25 threads the bilayer; the sequence is VSIFASLAPYLISAFLLFLLV. A heme-binding site is contributed by cysteine 434.

This sequence belongs to the cytochrome P450 family. It depends on heme as a cofactor. Expressed in the vascular tissues of roots, shoots and leaves. Expressed in root tips and sepals. Very low expression in stems and siliques.

It localises to the membrane. The enzyme catalyses 5-dehydroepisterol + NADPH + O2 + H(+) = ergosta-5,7,22,24(28)-tetraen-3beta-ol + NADP(+) + 2 H2O. It functions in the pathway steroid biosynthesis; sterol biosynthesis. Functionally, required to form the C-22 double bond in the sterol side chain. Possesses in vitro C-22 desaturase activity toward beta-sitosterol and produces stigmasterol. No activity with campesterol. The sequence is that of Cytochrome P450 710A1 from Arabidopsis thaliana (Mouse-ear cress).